Consider the following 579-residue polypeptide: Adenine deaminase (579 aa).

Belongs to the metallo-dependent hydrolases superfamily. Adenine deaminase family. It depends on Mn(2+) as a cofactor.

The catalysed reaction is adenine + H2O + H(+) = hypoxanthine + NH4(+). This is Adenine deaminase from Listeria welshimeri serovar 6b (strain ATCC 35897 / DSM 20650 / CCUG 15529 / CIP 8149 / NCTC 11857 / SLCC 5334 / V8).